The following is a 702-amino-acid chain: Ribosomal RNA large subunit methyltransferase K/L (702 aa).

In terms of domain architecture, THUMP spans 43 to 154; that stretch reads LVYQSLMWSR…KETASIALDL (112 aa).

The protein belongs to the methyltransferase superfamily. RlmKL family.

It is found in the cytoplasm. It carries out the reaction guanosine(2445) in 23S rRNA + S-adenosyl-L-methionine = N(2)-methylguanosine(2445) in 23S rRNA + S-adenosyl-L-homocysteine + H(+). The catalysed reaction is guanosine(2069) in 23S rRNA + S-adenosyl-L-methionine = N(2)-methylguanosine(2069) in 23S rRNA + S-adenosyl-L-homocysteine + H(+). Functionally, specifically methylates the guanine in position 2445 (m2G2445) and the guanine in position 2069 (m7G2069) of 23S rRNA. The sequence is that of Ribosomal RNA large subunit methyltransferase K/L from Shigella sonnei (strain Ss046).